We begin with the raw amino-acid sequence, 616 residues long: Chaperone protein HscA (616 aa).

It belongs to the heat shock protein 70 family.

In terms of biological role, chaperone involved in the maturation of iron-sulfur cluster-containing proteins. Has a low intrinsic ATPase activity which is markedly stimulated by HscB. Involved in the maturation of IscU. This Shigella boydii serotype 18 (strain CDC 3083-94 / BS512) protein is Chaperone protein HscA.